Reading from the N-terminus, the 200-residue chain is Holliday junction branch migration complex subunit RuvA (200 aa).

Residues 1-65 are domain I; sequence MYEYIKGTLT…ETEHVLYGFS (65 aa). The segment at 66-144 is domain II; that stretch reads SRAERECFRL…TLMPLYLEEP (79 aa). Positions 145 to 149 are flexible linker; sequence VVPSS. Residues 150–200 are domain III; that stretch reads TANSSFKEGIGALMNLGFSRLAADRMMTEAVKELSEEASVAELLPIALRKS.

It belongs to the RuvA family. As to quaternary structure, homotetramer. Forms an RuvA(8)-RuvB(12)-Holliday junction (HJ) complex. HJ DNA is sandwiched between 2 RuvA tetramers; dsDNA enters through RuvA and exits via RuvB. An RuvB hexamer assembles on each DNA strand where it exits the tetramer. Each RuvB hexamer is contacted by two RuvA subunits (via domain III) on 2 adjacent RuvB subunits; this complex drives branch migration. In the full resolvosome a probable DNA-RuvA(4)-RuvB(12)-RuvC(2) complex forms which resolves the HJ.

The protein resides in the cytoplasm. Its function is as follows. The RuvA-RuvB-RuvC complex processes Holliday junction (HJ) DNA during genetic recombination and DNA repair, while the RuvA-RuvB complex plays an important role in the rescue of blocked DNA replication forks via replication fork reversal (RFR). RuvA specifically binds to HJ cruciform DNA, conferring on it an open structure. The RuvB hexamer acts as an ATP-dependent pump, pulling dsDNA into and through the RuvAB complex. HJ branch migration allows RuvC to scan DNA until it finds its consensus sequence, where it cleaves and resolves the cruciform DNA. This Chlamydia trachomatis serovar L2 (strain ATCC VR-902B / DSM 19102 / 434/Bu) protein is Holliday junction branch migration complex subunit RuvA.